The primary structure comprises 1959 residues: Zinc finger protein hangover (1959 aa).

The 77-residue stretch at 79-155 (NCCRLCIAPQ…FSSQAKQRQW (77 aa)) folds into the ZAD domain. C81, C84, C128, and C131 together coordinate Zn(2+). The disordered stretch occupies residues 178 to 208 (GFFDQHLHQQQQHHQHLENELEAEKEKATPT). The span at 192–205 (QHLENELEAEKEKA) shows a compositional bias: basic and acidic residues. Residue S228 is modified to Phosphoserine. At T246 the chain carries Phosphothreonine. Residues 318–341 (ASCRACSLQFSTRANARRHERNLH) form a C2H2-type 1 zinc finger. The C2H2-type 2; degenerate zinc finger occupies 447 to 469 (MTCRCCNKYFSTYKNFMAHVRKK). The segment at 581–604 (YECKLCPKGFRTKHEFRTHVYDKH) adopts a C2H2-type 3 zinc-finger fold. The segment at 674-762 (AVSDNASTTG…ANRDASAPKS (89 aa)) is disordered. Residues 677–693 (DNASTTGSGMARSNSME) are compositionally biased toward polar residues. At S680 the chain carries Phosphoserine. 2 stretches are compositionally biased toward low complexity: residues 716–727 (SSSAAPPLTSTP) and 741–759 (TSAS…DASA). 2 consecutive C2H2-type zinc fingers follow at residues 770-793 (QVCP…ESKH) and 801-824 (YKCV…INVH). A phosphoserine mark is found at S832, S894, S895, S898, and S899. Residues 908–930 (KECPICNAVFSNNIGLSNHMRSH) form a C2H2-type 6 zinc finger. A disordered region spans residues 960–991 (TDSELGVGGTMSESAPATPANVPPAMANQTPQ). 5 C2H2-type zinc fingers span residues 1011 to 1034 (MRCR…LTDH), 1042 to 1065 (IKCK…FKVH), 1078 to 1101 (FECD…RSVH), 1154 to 1176 (YQCK…INSH), and 1184 to 1207 (YSCK…YKKH). The span at 1233-1253 (TPTCNRKPITSTGAHQQQDGQ) shows a compositional bias: polar residues. Positions 1233 to 1301 (TPTCNRKPIT…GNGTTVGVAS (69 aa)) are disordered. The segment covering 1255 to 1267 (HSHHTAKRTIFRH) has biased composition (basic residues). Acidic residues predominate over residues 1271–1283 (DDDDEEDDDEQQQ). C2H2-type zinc fingers lie at residues 1318-1340 (VACT…IQKH) and 1375-1397 (YACD…RKWH). The segment covering 1445 to 1467 (QQSLNNSCNSSMNHNNNSSSNRS) has biased composition (low complexity). A disordered region spans residues 1445–1471 (QQSLNNSCNSSMNHNNNSSSNRSKSMK). 2 C2H2-type zinc fingers span residues 1476–1499 (LKCE…YELH) and 1552–1574 (WGCD…INNH). Residues 1627 to 1865 (AAGATTTDKL…STGERRKKAV (239 aa)) form a disordered region. A compositionally biased stretch (acidic residues) spans 1639-1695 (PDEEDSDDLDEDSSGDDDDSSGTGDDDDDDDSDDDEDGEGEDEDEEGDGGEGEDEEG). Low complexity predominate over residues 1697-1715 (QPPAQLLPQQQHKTDLNLN). Composition is skewed to acidic residues over residues 1716–1758 (QDDD…EEPE) and 1782–1829 (SDDE…EDEP). Residues 1833-1851 (STASFSESESSTTTTSNSH) show a composition bias toward low complexity. The C2H2-type 16 zinc finger occupies 1873–1895 (FTCDLCQLCFDSQELLQSHIKSH). The segment at 1933 to 1959 (PDSKSAVLANNNNSKTSSKTVAAGATN) is disordered. Positions 1942–1952 (NNNNSKTSSKT) are enriched in low complexity.

In terms of tissue distribution, expressed ubiquitously in the nervous system, in neurons not glia.

The protein resides in the nucleus. In terms of biological role, required for normal development of ethanol tolerance. Relies on two distinct molecular pathways: a cellular stress pathway defined by hang, and a parallel pathway requiring octopamine. In Drosophila melanogaster (Fruit fly), this protein is Zinc finger protein hangover (hang).